The following is a 618-amino-acid chain: DNA mismatch repair protein MutL (618 aa).

Belongs to the DNA mismatch repair MutL/HexB family.

In terms of biological role, this protein is involved in the repair of mismatches in DNA. It is required for dam-dependent methyl-directed DNA mismatch repair. May act as a 'molecular matchmaker', a protein that promotes the formation of a stable complex between two or more DNA-binding proteins in an ATP-dependent manner without itself being part of a final effector complex. This chain is DNA mismatch repair protein MutL, found in Porphyromonas gingivalis (strain ATCC BAA-308 / W83).